Reading from the N-terminus, the 216-residue chain is TATA-box-binding protein-like 1 (216 aa).

2 consecutive repeat copies span residues 38-121 (KPVI…QRLG) and 126-210 (FNHF…ILLQ).

This sequence belongs to the TBP family.

Its subcellular location is the nucleus. TATA box-binding transcription factor. Members of the TBP family are differentially required to regulate transcription and development during early embryogenesis. This Entamoeba histolytica (strain ATCC 30459 / HM-1:IMSS / ABRM) protein is TATA-box-binding protein-like 1 (trf1).